The following is a 103-amino-acid chain: NADH-quinone oxidoreductase subunit K (103 aa).

Helical transmembrane passes span 6–26, 30–50, and 66–86; these read IEYY…GFLL, LLVL…TLVA, and FFVI…VLAF.

The protein belongs to the complex I subunit 4L family. As to quaternary structure, NDH-1 is composed of 14 different subunits. Subunits NuoA, H, J, K, L, M, N constitute the membrane sector of the complex.

The protein localises to the cell inner membrane. The catalysed reaction is a quinone + NADH + 5 H(+)(in) = a quinol + NAD(+) + 4 H(+)(out). Functionally, NDH-1 shuttles electrons from NADH, via FMN and iron-sulfur (Fe-S) centers, to quinones in the respiratory chain. The immediate electron acceptor for the enzyme in this species is believed to be ubiquinone. Couples the redox reaction to proton translocation (for every two electrons transferred, four hydrogen ions are translocated across the cytoplasmic membrane), and thus conserves the redox energy in a proton gradient. The protein is NADH-quinone oxidoreductase subunit K of Sorangium cellulosum (strain So ce56) (Polyangium cellulosum (strain So ce56)).